An 82-amino-acid polypeptide reads, in one-letter code: Small ribosomal subunit protein uS17 (82 aa).

It belongs to the universal ribosomal protein uS17 family. As to quaternary structure, part of the 30S ribosomal subunit.

Functionally, one of the primary rRNA binding proteins, it binds specifically to the 5'-end of 16S ribosomal RNA. The sequence is that of Small ribosomal subunit protein uS17 from Nitrobacter winogradskyi (strain ATCC 25391 / DSM 10237 / CIP 104748 / NCIMB 11846 / Nb-255).